The primary structure comprises 317 residues: Phospho-N-acetylmuramoyl-pentapeptide-transferase (317 aa).

The next 9 membrane-spanning stretches (helical) occupy residues 6–26 (IVMA…IIIP), 52–72 (PTIG…IMVG), 78–98 (AMIA…DDLL), 114–134 (MILL…YIGT), 145–165 (INFG…VTNA), 171–191 (GLDG…GIIS), 194–214 (LGHI…LAFL), 223–244 (VFMG…ALIL), and 297–317 (KIVS…FASL).

It belongs to the glycosyltransferase 4 family. MraY subfamily. It depends on Mg(2+) as a cofactor.

The protein resides in the cell membrane. The enzyme catalyses UDP-N-acetyl-alpha-D-muramoyl-L-alanyl-gamma-D-glutamyl-meso-2,6-diaminopimeloyl-D-alanyl-D-alanine + di-trans,octa-cis-undecaprenyl phosphate = di-trans,octa-cis-undecaprenyl diphospho-N-acetyl-alpha-D-muramoyl-L-alanyl-D-glutamyl-meso-2,6-diaminopimeloyl-D-alanyl-D-alanine + UMP. The protein operates within cell wall biogenesis; peptidoglycan biosynthesis. Functionally, catalyzes the initial step of the lipid cycle reactions in the biosynthesis of the cell wall peptidoglycan: transfers peptidoglycan precursor phospho-MurNAc-pentapeptide from UDP-MurNAc-pentapeptide onto the lipid carrier undecaprenyl phosphate, yielding undecaprenyl-pyrophosphoryl-MurNAc-pentapeptide, known as lipid I. The polypeptide is Phospho-N-acetylmuramoyl-pentapeptide-transferase (Clostridium perfringens (strain 13 / Type A)).